The primary structure comprises 505 residues: Protein nucleotidyltransferase YdiU (505 aa).

8 residues coordinate ATP: Gly-102, Gly-104, Arg-105, Lys-125, Asp-137, Gly-138, Arg-188, and Arg-195. Residue Asp-264 is the Proton acceptor of the active site. Asn-265 and Asp-274 together coordinate Mg(2+). Asp-274 provides a ligand contact to ATP. The disordered stretch occupies residues 485-505 (FADYGKPPAPGEEVQQTFCGT).

It belongs to the SELO family. The cofactor is Mg(2+). Requires Mn(2+) as cofactor.

It carries out the reaction L-seryl-[protein] + ATP = 3-O-(5'-adenylyl)-L-seryl-[protein] + diphosphate. The enzyme catalyses L-threonyl-[protein] + ATP = 3-O-(5'-adenylyl)-L-threonyl-[protein] + diphosphate. It catalyses the reaction L-tyrosyl-[protein] + ATP = O-(5'-adenylyl)-L-tyrosyl-[protein] + diphosphate. The catalysed reaction is L-histidyl-[protein] + UTP = N(tele)-(5'-uridylyl)-L-histidyl-[protein] + diphosphate. It carries out the reaction L-seryl-[protein] + UTP = O-(5'-uridylyl)-L-seryl-[protein] + diphosphate. The enzyme catalyses L-tyrosyl-[protein] + UTP = O-(5'-uridylyl)-L-tyrosyl-[protein] + diphosphate. In terms of biological role, nucleotidyltransferase involved in the post-translational modification of proteins. It can catalyze the addition of adenosine monophosphate (AMP) or uridine monophosphate (UMP) to a protein, resulting in modifications known as AMPylation and UMPylation. This is Protein nucleotidyltransferase YdiU from Nitrobacter hamburgensis (strain DSM 10229 / NCIMB 13809 / X14).